Consider the following 436-residue polypeptide: GTPase Der (436 aa).

EngA-type G domains lie at 4–167 (PTVA…PTEA) and 175–351 (IKFS…QSQN). Residues 10 to 17 (GRPNVGKS), 57 to 61 (DTGGI), 119 to 122 (NKVD), 181 to 188 (GRPNVGKS), 229 to 233 (DTAGM), and 294 to 297 (NKWD) contribute to the GTP site. The KH-like domain maps to 352–436 (TRIPSAVLND…PIRLIARKRK (85 aa)).

It belongs to the TRAFAC class TrmE-Era-EngA-EngB-Septin-like GTPase superfamily. EngA (Der) GTPase family. In terms of assembly, associates with the 50S ribosomal subunit.

Functionally, GTPase that plays an essential role in the late steps of ribosome biogenesis. The polypeptide is GTPase Der (Streptococcus mutans serotype c (strain ATCC 700610 / UA159)).